The following is a 158-amino-acid chain: Transcription elongation factor GreA (158 aa).

Residues 49-69 (SEYESAKDEQAFVEGRISQIE) adopt a coiled-coil conformation. Residues 102–125 (EEPESYTIVGESESDPLSGKISNE) form a disordered region.

The protein belongs to the GreA/GreB family.

In terms of biological role, necessary for efficient RNA polymerase transcription elongation past template-encoded arresting sites. The arresting sites in DNA have the property of trapping a certain fraction of elongating RNA polymerases that pass through, resulting in locked ternary complexes. Cleavage of the nascent transcript by cleavage factors such as GreA or GreB allows the resumption of elongation from the new 3'terminus. GreA releases sequences of 2 to 3 nucleotides. In Limosilactobacillus fermentum (strain NBRC 3956 / LMG 18251) (Lactobacillus fermentum), this protein is Transcription elongation factor GreA.